A 143-amino-acid polypeptide reads, in one-letter code: uncharacterized protein (143 aa).

This is an uncharacterized protein from Archaeoglobus fulgidus (strain ATCC 49558 / DSM 4304 / JCM 9628 / NBRC 100126 / VC-16).